The primary structure comprises 472 residues: 3-isopropylmalate dehydratase large subunit (472 aa).

A disordered region spans residues 61 to 80 (TPDHNVPTTQKERASGVEGI). Cys-353, Cys-414, and Cys-417 together coordinate [4Fe-4S] cluster.

It belongs to the aconitase/IPM isomerase family. LeuC type 1 subfamily. In terms of assembly, heterodimer of LeuC and LeuD. Requires [4Fe-4S] cluster as cofactor.

The catalysed reaction is (2R,3S)-3-isopropylmalate = (2S)-2-isopropylmalate. The protein operates within amino-acid biosynthesis; L-leucine biosynthesis; L-leucine from 3-methyl-2-oxobutanoate: step 2/4. Functionally, catalyzes the isomerization between 2-isopropylmalate and 3-isopropylmalate, via the formation of 2-isopropylmaleate. The chain is 3-isopropylmalate dehydratase large subunit from Saccharophagus degradans (strain 2-40 / ATCC 43961 / DSM 17024).